The primary structure comprises 557 residues: Formate--tetrahydrofolate ligase (557 aa).

Position 67 to 74 (67 to 74 (TPAGEGKT)) interacts with ATP.

Belongs to the formate--tetrahydrofolate ligase family.

It catalyses the reaction (6S)-5,6,7,8-tetrahydrofolate + formate + ATP = (6R)-10-formyltetrahydrofolate + ADP + phosphate. The protein operates within one-carbon metabolism; tetrahydrofolate interconversion. In Cereibacter sphaeroides (strain ATCC 17025 / ATH 2.4.3) (Rhodobacter sphaeroides), this protein is Formate--tetrahydrofolate ligase.